The primary structure comprises 508 residues: Photosystem II CP47 reaction center protein (508 aa).

The next 6 helical transmembrane spans lie at 21–36, 101–115, 140–156, 203–218, 237–252, and 457–472; these read AVHI…WAGS, IVFS…IWHW, GIHL…FGAF, IAAG…FHLS, VLSS…AFVV, and SFAL…HGAR.

This sequence belongs to the PsbB/PsbC family. PsbB subfamily. As to quaternary structure, PSII is composed of 1 copy each of membrane proteins PsbA, PsbB, PsbC, PsbD, PsbE, PsbF, PsbH, PsbI, PsbJ, PsbK, PsbL, PsbM, PsbT, PsbX, PsbY, PsbZ, Psb30/Ycf12, at least 3 peripheral proteins of the oxygen-evolving complex and a large number of cofactors. It forms dimeric complexes. The cofactor is Binds multiple chlorophylls. PSII binds additional chlorophylls, carotenoids and specific lipids..

It is found in the plastid. It localises to the chloroplast thylakoid membrane. Its function is as follows. One of the components of the core complex of photosystem II (PSII). It binds chlorophyll and helps catalyze the primary light-induced photochemical processes of PSII. PSII is a light-driven water:plastoquinone oxidoreductase, using light energy to abstract electrons from H(2)O, generating O(2) and a proton gradient subsequently used for ATP formation. The sequence is that of Photosystem II CP47 reaction center protein from Ranunculus macranthus (Large buttercup).